A 692-amino-acid chain; its full sequence is Follicle-stimulating hormone receptor (692 aa).

An N-terminal signal peptide occupies residues 1-17 (MALLLVSLLAFLGSGSG). Cystine bridges form between cysteine 18-cysteine 25 and cysteine 23-cysteine 32. Residues 18-46 (CHHWLCHCSNRVFLCQDSKVTEIPPDLPR) form the LRRNT domain. Residues 18–365 (CHHWLCHCSN…EDIMGYNILR (348 aa)) are Extracellular-facing. LRR repeat units lie at residues 49-72 (IELR…FGDL), 73-97 (EKIE…LPNL), 98-118 (HEIR…AFQN), 119-143 (LPSL…KIQS), 144-169 (LQKV…MGLS), 170-192 (FESV…AFNG), 193-216 (TQLD…VFQG), 217-240 (ASGP…GLEN), and 241-259 (LKKL…PSLD). Asparagine 191 and asparagine 199 each carry an N-linked (GlcNAc...) asparagine glycan. 4 disulfides stabilise this stretch: cysteine 275-cysteine 345, cysteine 276-cysteine 292, cysteine 276-cysteine 355, and cysteine 292-cysteine 337. Asparagine 293 carries an N-linked (GlcNAc...) asparagine glycan. Sulfotyrosine is present on tyrosine 334. A helical transmembrane segment spans residues 366–386 (VLIWFISILAITGNTTVLVVL). Residues 387–397 (TTSQYKLTVPR) are Cytoplasmic-facing. Residues 398–420 (FLMCNLAFADLCIGIYLLLIASV) traverse the membrane as a helical segment. Topologically, residues 421–442 (DIHTKSQYHNYAIDWQTGAGCD) are extracellular. The cysteines at positions 441 and 516 are disulfide-linked. Residues 443–464 (AAGFFTVFASELSVYTLAAITL) form a helical membrane-spanning segment. Residues 465–484 (ERWHTITHAMQLECKVQLCH) lie on the Cytoplasmic side of the membrane. A helical membrane pass occupies residues 485 to 507 (AASIMVLGWAFAFAAALFPIFGI). Residues 508–527 (SSYMKVSICLPMDIDSPLSQ) lie on the Extracellular side of the membrane. A helical transmembrane segment spans residues 528-549 (LYVMALLVLNALAFVVICGCYT). The Cytoplasmic portion of the chain corresponds to 550 to 572 (HIYLTVRNPNIVSSSRDTKIAKR). The chain crosses the membrane as a helical span at residues 573 to 596 (MATLIFTDFLCMAPILFFAISASL). Over 597–607 (KVPLITVSKAK) the chain is Extracellular. A helical transmembrane segment spans residues 608–629 (ILLVLFYPINSCANPFLYAIFT). Over 630-692 (KNFRRDFFVL…LVPLNHSVQN (63 aa)) the chain is Cytoplasmic.

The protein belongs to the G-protein coupled receptor 1 family. FSH/LSH/TSH subfamily. In terms of assembly, homotrimer. Functions as a homotrimer binding the FSH hormone heterodimer composed of CGA and FSHB. Interacts with ARRB2. Interacts with APPL2; interaction is independent of follicle stimulating hormone stimulation. In terms of processing, N-glycosylated; indirectly required for FSH-binding, possibly via a conformational change that allows high affinity binding of hormone. Post-translationally, sulfated.

It is found in the cell membrane. G protein-coupled receptor for follitropin, the follicle-stimulating hormone. Through cAMP production activates the downstream PI3K-AKT and ERK1/ERK2 signaling pathways. The sequence is that of Follicle-stimulating hormone receptor (Fshr) from Mus musculus (Mouse).